Consider the following 149-residue polypeptide: MVYSTKLGEIEITDDQIFVFEEGIPGFEHLKKFALIFPEETFPIGWLLSLEDSHVGLPVVDPKLVRPDYDPVVPSEDLEKLGVSNQDELLFFCVLTIPPGKPEEATINLRAPIIIRQNTKKGMQVILENADYHLKHLLSEEMERAKSMV.

It belongs to the FliW family. Interacts with translational regulator CsrA and flagellin(s).

The protein resides in the cytoplasm. Its function is as follows. Acts as an anti-CsrA protein, binds CsrA and prevents it from repressing translation of its target genes, one of which is flagellin. Binds to flagellin and participates in the assembly of the flagellum. The protein is Flagellar assembly factor FliW of Thermotoga neapolitana (strain ATCC 49049 / DSM 4359 / NBRC 107923 / NS-E).